We begin with the raw amino-acid sequence, 87 residues long: Small ribosomal subunit protein bS20 (87 aa).

A disordered region spans residues 1 to 22 (MANSAQARKRARQSVKQRAHNA). Basic residues predominate over residues 7-19 (ARKRARQSVKQRA).

Belongs to the bacterial ribosomal protein bS20 family.

Binds directly to 16S ribosomal RNA. This Neisseria gonorrhoeae (strain ATCC 700825 / FA 1090) protein is Small ribosomal subunit protein bS20.